A 173-amino-acid chain; its full sequence is N-alpha-acetyltransferase 20 (173 aa).

Residues 2–151 (TTIRRFVCDD…DALDMRKALP (150 aa)) enclose the N-acetyltransferase domain.

The protein belongs to the acetyltransferase family. ARD1 subfamily.

In terms of biological role, seems to be involved in N-acetylation. The polypeptide is N-alpha-acetyltransferase 20 (nat5) (Dictyostelium discoideum (Social amoeba)).